The primary structure comprises 352 residues: Phenylalanine--tRNA ligase alpha subunit (352 aa).

Glu-258 serves as a coordination point for Mg(2+).

The protein belongs to the class-II aminoacyl-tRNA synthetase family. Phe-tRNA synthetase alpha subunit type 1 subfamily. As to quaternary structure, tetramer of two alpha and two beta subunits. It depends on Mg(2+) as a cofactor.

Its subcellular location is the cytoplasm. The enzyme catalyses tRNA(Phe) + L-phenylalanine + ATP = L-phenylalanyl-tRNA(Phe) + AMP + diphosphate + H(+). This is Phenylalanine--tRNA ligase alpha subunit from Staphylococcus carnosus (strain TM300).